Here is a 282-residue protein sequence, read N- to C-terminus: Pantothenate synthetase (282 aa).

ATP is bound at residue 31 to 38 (MGYLHEGH). His38 functions as the Proton donor in the catalytic mechanism. Position 62 (Gln62) interacts with (R)-pantoate. Gln62 is a binding site for beta-alanine. 148-151 (GEKD) contributes to the ATP binding site. Residue Gln154 coordinates (R)-pantoate. ATP is bound by residues Val177 and 185-188 (YSSR).

It belongs to the pantothenate synthetase family. As to quaternary structure, homodimer.

It is found in the cytoplasm. The catalysed reaction is (R)-pantoate + beta-alanine + ATP = (R)-pantothenate + AMP + diphosphate + H(+). The protein operates within cofactor biosynthesis; (R)-pantothenate biosynthesis; (R)-pantothenate from (R)-pantoate and beta-alanine: step 1/1. Its function is as follows. Catalyzes the condensation of pantoate with beta-alanine in an ATP-dependent reaction via a pantoyl-adenylate intermediate. This is Pantothenate synthetase from Aquifex aeolicus (strain VF5).